A 449-amino-acid chain; its full sequence is Glycine--tRNA ligase (449 aa).

Positions 100 and 158 each coordinate substrate. Residues 190 to 192, 200 to 205, 275 to 276, and 319 to 322 each bind ATP; these read RNE, FRVREF, EL, and GIER. A substrate-binding site is contributed by 205–209; sequence FEQFE. Residue 315 to 319 participates in substrate binding; it reads EPSVG.

The protein belongs to the class-II aminoacyl-tRNA synthetase family. As to quaternary structure, homodimer.

Its subcellular location is the cytoplasm. It catalyses the reaction tRNA(Gly) + glycine + ATP = glycyl-tRNA(Gly) + AMP + diphosphate. In terms of biological role, catalyzes the attachment of glycine to tRNA(Gly). This Mycoplasma pneumoniae (strain ATCC 29342 / M129 / Subtype 1) (Mycoplasmoides pneumoniae) protein is Glycine--tRNA ligase.